The sequence spans 283 residues: Ribosomal RNA small subunit methyltransferase A (283 aa).

Residues Asn-13, Leu-15, Gly-39, Glu-59, Asp-87, and Asn-108 each coordinate S-adenosyl-L-methionine.

The protein belongs to the class I-like SAM-binding methyltransferase superfamily. rRNA adenine N(6)-methyltransferase family. RsmA subfamily.

It localises to the cytoplasm. It catalyses the reaction adenosine(1518)/adenosine(1519) in 16S rRNA + 4 S-adenosyl-L-methionine = N(6)-dimethyladenosine(1518)/N(6)-dimethyladenosine(1519) in 16S rRNA + 4 S-adenosyl-L-homocysteine + 4 H(+). Functionally, specifically dimethylates two adjacent adenosines (A1518 and A1519) in the loop of a conserved hairpin near the 3'-end of 16S rRNA in the 30S particle. May play a critical role in biogenesis of 30S subunits. The polypeptide is Ribosomal RNA small subunit methyltransferase A (Helicobacter hepaticus (strain ATCC 51449 / 3B1)).